Reading from the N-terminus, the 346-residue chain is S-adenosylmethionine:tRNA ribosyltransferase-isomerase (346 aa).

The protein belongs to the QueA family. As to quaternary structure, monomer.

It is found in the cytoplasm. The enzyme catalyses 7-aminomethyl-7-carbaguanosine(34) in tRNA + S-adenosyl-L-methionine = epoxyqueuosine(34) in tRNA + adenine + L-methionine + 2 H(+). The protein operates within tRNA modification; tRNA-queuosine biosynthesis. Its function is as follows. Transfers and isomerizes the ribose moiety from AdoMet to the 7-aminomethyl group of 7-deazaguanine (preQ1-tRNA) to give epoxyqueuosine (oQ-tRNA). The sequence is that of S-adenosylmethionine:tRNA ribosyltransferase-isomerase from Borreliella afzelii (strain PKo) (Borrelia afzelii).